A 446-amino-acid chain; its full sequence is tRNA(Ile2) 2-agmatinylcytidine synthetase TiaS (446 aa).

The protein belongs to the TiaS family.

The protein localises to the cytoplasm. It catalyses the reaction cytidine(34) in tRNA(Ile2) + agmatine + ATP + H2O = 2-agmatinylcytidine(34) in tRNA(Ile2) + AMP + 2 phosphate + 2 H(+). ATP-dependent agmatine transferase that catalyzes the formation of 2-agmatinylcytidine (agm2C) at the wobble position (C34) of tRNA(Ile2), converting the codon specificity from AUG to AUA. The sequence is that of tRNA(Ile2) 2-agmatinylcytidine synthetase TiaS from Cenarchaeum symbiosum (strain A).